A 364-amino-acid polypeptide reads, in one-letter code: Phosrestin-2 (364 aa).

The protein belongs to the arrestin family. Phosphorylated, but does not undergo light-induced phosphorylation. As to expression, expressed specifically and abundantly in photoreceptor cells in retina and ocelli.

Its subcellular location is the cell projection. The protein localises to the rhabdomere. Functionally, regulates photoreceptor cell deactivation. Arr1 and Arr2 proteins are mediators of rhodopsin inactivation and are essential for the termination of the phototransduction cascade. Involved in regulating normal cycles of per nuclear accumulation in brain circadian neurons and thus is important for normal circadian behavior. In the dark, functions with Arr2 to promote the formation of cytosolic Bdbt foci, which are required for dco localization to photoreceptor nuclei where it phosphorylates and activates degradation of per. The chain is Phosrestin-2 (Arr1) from Drosophila melanogaster (Fruit fly).